A 53-amino-acid polypeptide reads, in one-letter code: Large ribosomal subunit protein bL33B (53 aa).

Belongs to the bacterial ribosomal protein bL33 family.

This is Large ribosomal subunit protein bL33B from Sorangium cellulosum (strain So ce56) (Polyangium cellulosum (strain So ce56)).